A 340-amino-acid polypeptide reads, in one-letter code: Protein SSUH2 homolog (340 aa).

The span at Met1–Met11 shows a compositional bias: acidic residues. A disordered region spans residues Met1–Ser20.

As to expression, widely expressed, with highest levels in the liver, intestine, tongue and underjaw.

Its subcellular location is the cytoplasm. It localises to the nucleus. In terms of biological role, plays a role in odontogenesis. This is Protein SSUH2 homolog from Mus musculus (Mouse).